The chain runs to 193 residues: CASP-like protein 1F3 (193 aa).

The tract at residues Met1–Ser25 is disordered. At Met1–Gln35 the chain is on the cytoplasmic side. The chain crosses the membrane as a helical span at residues Ile36 to Ala56. Topologically, residues Lys57–Lys78 are extracellular. A helical transmembrane segment spans residues Phe79 to Trp99. Residues Pro100–Asp118 lie on the Cytoplasmic side of the membrane. Residues Met119–Ser139 form a helical membrane-spanning segment. The Extracellular segment spans residues Gln140–Gln161. Residues Met162–Leu182 traverse the membrane as a helical segment. Topologically, residues Ser183–Glu193 are cytoplasmic.

It belongs to the Casparian strip membrane proteins (CASP) family. In terms of assembly, homodimer and heterodimers.

It is found in the cell membrane. The chain is CASP-like protein 1F3 from Populus trichocarpa (Western balsam poplar).